Here is a 160-residue protein sequence, read N- to C-terminus: Cytosolic iron-sulfur assembly component 2A (160 aa).

Zn(2+) is bound by residues H89, H123, E150, and E153.

This sequence belongs to the MIP18 family. As to quaternary structure, monomer and homodimer. Component of the CIA complex. Interacts with CIAO1. Interacts with IREB2. Interacts with APAF1.

The protein localises to the cytoplasm. Component of the cytosolic iron-sulfur protein assembly (CIA) complex, a multiprotein complex that mediates the incorporation of iron-sulfur cluster into extramitochondrial Fe/S proteins. As a CIA complex component and in collaboration with CIAO1 specifically matures ACO1 and stabilizes IREB2, connecting cytosolic iron-sulfur protein maturation with cellular iron regulation. May play a role in chromosome segregation through establishment of sister chromatid cohesion. May induce apoptosis in collaboration with APAF1. This chain is Cytosolic iron-sulfur assembly component 2A, found in Bos taurus (Bovine).